Here is a 708-residue protein sequence, read N- to C-terminus: Polyribonucleotide nucleotidyltransferase (708 aa).

Residues Asp-486 and Asp-492 each coordinate Mg(2+). The region spanning 553–612 (PRITTIKVPPQKVREVIGSGGKVIREITEVTGTKIDIEDDGTIKIASADAEATQRAVDWI) is the KH domain. The S1 motif domain maps to 622-690 (GVVYTGKVVK…DRGKIKLSMK (69 aa)).

Belongs to the polyribonucleotide nucleotidyltransferase family. It depends on Mg(2+) as a cofactor.

The protein resides in the cytoplasm. It catalyses the reaction RNA(n+1) + phosphate = RNA(n) + a ribonucleoside 5'-diphosphate. Functionally, involved in mRNA degradation. Catalyzes the phosphorolysis of single-stranded polyribonucleotides processively in the 3'- to 5'-direction. In Rhodospirillum rubrum (strain ATCC 11170 / ATH 1.1.1 / DSM 467 / LMG 4362 / NCIMB 8255 / S1), this protein is Polyribonucleotide nucleotidyltransferase.